The following is a 474-amino-acid chain: MTVKTRFAPSPTGYLHVGGARTALYSWLYAKSQGGEFVLRIEDTDLERNSQEAVDAILEGMQWLGLEWNEGPYFQTQRFDRYNEMVDKLLAEDKAYKCYASKELLDEVRAEQEANKEMPRYDAEHPKIKAANEAAKDGDPCVIRFRNPKEGSVVFEDQIRGRIEISNSQMDDLIIRRTDGSPTYNFCVVVDDWDMGITHVIRGEDHINNTPRQINIYEALGAPVPTFAHCAMILGDDGAKLSKRHGAVSVMQYRDMGYLPVALNNYLVRLGWSHGDQEIFSQEEMINLFSLNAISKSASAFNTDKLLWLNNHYIKTSDPKYVAEHLQWHLDQKDIKTENGPAITDVIKLVGERCNTLVELADQIGYFYQDFDAFDADAAKKHLRGVAKQPLEVALAKVEALTEWTTENLHQVIADVCTDLEIGMGKIGMPLRVAVTGGGQSPSVDAVMQLIGKERVVARIKMALAFIAEREANA.

Residues 9 to 19 carry the 'HIGH' region motif; it reads PSPTGYLHVGG. A 'KMSKS' region motif is present at residues 240-244; sequence KLSKR. Lys243 contributes to the ATP binding site.

This sequence belongs to the class-I aminoacyl-tRNA synthetase family. Glutamate--tRNA ligase type 1 subfamily. As to quaternary structure, monomer.

The protein resides in the cytoplasm. The enzyme catalyses tRNA(Glu) + L-glutamate + ATP = L-glutamyl-tRNA(Glu) + AMP + diphosphate. Its function is as follows. Catalyzes the attachment of glutamate to tRNA(Glu) in a two-step reaction: glutamate is first activated by ATP to form Glu-AMP and then transferred to the acceptor end of tRNA(Glu). The polypeptide is Glutamate--tRNA ligase (Vibrio vulnificus (strain YJ016)).